Here is a 243-residue protein sequence, read N- to C-terminus: UPF0246 protein M28_Spy1772 (243 aa).

It belongs to the UPF0246 family.

The chain is UPF0246 protein M28_Spy1772 from Streptococcus pyogenes serotype M28 (strain MGAS6180).